Here is a 377-residue protein sequence, read N- to C-terminus: Chaperone protein DnaJ (377 aa).

Residues 5-70 (DYYEILGVSK…EKRSAYDQYG (66 aa)) enclose the J domain. The CR-type zinc-finger motif lies at 131 to 209 (GVVREICVPT…CRGSGRIERT (79 aa)). Zn(2+) is bound by residues cysteine 144, cysteine 147, cysteine 161, cysteine 164, cysteine 183, cysteine 186, cysteine 197, and cysteine 200. 4 CXXCXGXG motif repeats span residues 144-151 (CLQCRGSG), 161-168 (CVTCHGHG), 183-190 (CPSCNGHG), and 197-204 (CNKCRGSG).

Belongs to the DnaJ family. As to quaternary structure, homodimer. Zn(2+) serves as cofactor.

It localises to the cytoplasm. In terms of biological role, participates actively in the response to hyperosmotic and heat shock by preventing the aggregation of stress-denatured proteins and by disaggregating proteins, also in an autonomous, DnaK-independent fashion. Unfolded proteins bind initially to DnaJ; upon interaction with the DnaJ-bound protein, DnaK hydrolyzes its bound ATP, resulting in the formation of a stable complex. GrpE releases ADP from DnaK; ATP binding to DnaK triggers the release of the substrate protein, thus completing the reaction cycle. Several rounds of ATP-dependent interactions between DnaJ, DnaK and GrpE are required for fully efficient folding. Also involved, together with DnaK and GrpE, in the DNA replication of plasmids through activation of initiation proteins. The sequence is that of Chaperone protein DnaJ from Blochmanniella floridana.